Reading from the N-terminus, the 396-residue chain is Elongation factor Tu (396 aa).

Positions 10–206 (KPHVNIGTIG…AVDESVPDPV (197 aa)) constitute a tr-type G domain. Residues 19–26 (GHVDHGKT) form a G1 region. 19-26 (GHVDHGKT) is a GTP binding site. T26 provides a ligand contact to Mg(2+). Residues 62 to 66 (GITIN) are G2. A G3 region spans residues 83–86 (DAPG). Residues 83-87 (DAPGH) and 138-141 (NKSD) contribute to the GTP site. Positions 138–141 (NKSD) are G4. A G5 region spans residues 176-178 (SGL).

Belongs to the TRAFAC class translation factor GTPase superfamily. Classic translation factor GTPase family. EF-Tu/EF-1A subfamily. Monomer.

The protein localises to the cytoplasm. The catalysed reaction is GTP + H2O = GDP + phosphate + H(+). GTP hydrolase that promotes the GTP-dependent binding of aminoacyl-tRNA to the A-site of ribosomes during protein biosynthesis. The sequence is that of Elongation factor Tu from Paenarthrobacter aurescens (strain TC1).